Here is a 216-residue protein sequence, read N- to C-terminus: Small ribosomal subunit protein uS3 (216 aa).

One can recognise a KH type-2 domain in the interval 39–111 (IYKFFDKLVR…DINLQVSLLK (73 aa)).

Belongs to the universal ribosomal protein uS3 family. In terms of assembly, part of the 30S ribosomal subunit. Forms a tight complex with proteins S10 and S14.

Functionally, binds the lower part of the 30S subunit head. Binds mRNA in the 70S ribosome, positioning it for translation. This chain is Small ribosomal subunit protein uS3, found in Mycoplasmopsis agalactiae (strain NCTC 10123 / CIP 59.7 / PG2) (Mycoplasma agalactiae).